Reading from the N-terminus, the 466-residue chain is Cysteine--tRNA ligase (466 aa).

Cys-29 provides a ligand contact to Zn(2+). The 'HIGH' region motif lies at Ala-31–His-41. Positions 211, 236, and 240 each coordinate Zn(2+). The short motif at Lys-267–Ser-271 is the 'KMSKS' region element. Lys-270 provides a ligand contact to ATP.

This sequence belongs to the class-I aminoacyl-tRNA synthetase family. As to quaternary structure, monomer. It depends on Zn(2+) as a cofactor.

It localises to the cytoplasm. It catalyses the reaction tRNA(Cys) + L-cysteine + ATP = L-cysteinyl-tRNA(Cys) + AMP + diphosphate. The sequence is that of Cysteine--tRNA ligase from Thermobifida fusca (strain YX).